A 105-amino-acid polypeptide reads, in one-letter code: Thioredoxin (105 aa).

The Thioredoxin domain maps to 2–103 (VKQIESKSAF…KEKLEATIKG (102 aa)). N6-acetyllysine is present on lysine 3. Lysine 8 is modified (N6-succinyllysine). Catalysis depends on nucleophile residues cysteine 32 and cysteine 35. Cysteine 32 and cysteine 35 are joined by a disulfide. Position 39 is an N6-acetyllysine (lysine 39). Cysteine 62 and cysteine 69 each carry S-nitrosocysteine. At cysteine 73 the chain carries S-nitrosocysteine; alternate. At lysine 94 the chain carries N6-acetyllysine; alternate. Lysine 94 is modified (N6-succinyllysine; alternate).

This sequence belongs to the thioredoxin family. Homodimer; disulfide-linked. Interacts with TXNIP through the redox-active site. Interacts with MAP3K5 and CASP3. Interacts with APEX1; the interaction stimulates the FOS/JUN AP-1 DNA-binding activity in a redox-dependent manner. In terms of processing, in the fully reduced protein, both Cys-69 and Cys-73 are nitrosylated in response to nitric oxide (NO). When two disulfide bonds are present in the protein, only Cys-73 is nitrosylated. Cys-73 can serve as donor for nitrosylation of target proteins.

Its subcellular location is the nucleus. It is found in the cytoplasm. The protein resides in the secreted. Functionally, participates in various redox reactions through the reversible oxidation of its active center dithiol to a disulfide and catalyzes dithiol-disulfide exchange reactions. Plays a role in the reversible S-nitrosylation of cysteine residues in target proteins, and thereby contributes to the response to intracellular nitric oxide. Nitrosylates the active site Cys of CASP3 in response to nitric oxide (NO), and thereby inhibits caspase-3 activity. Induces the FOS/JUN AP-1 DNA binding activity in ionizing radiation (IR) cells through its oxidation/reduction status and stimulates AP-1 transcriptional activity. The sequence is that of Thioredoxin (TXN) from Equus caballus (Horse).